The chain runs to 278 residues: MYSIYEAPFMKEMCEMTQNLWRNGWAEKNGGNISQLLEASEIKHYLDTDRYLWTEPLGFDASPLAGNVFLVSGSGKYFKNVQKNPADNLCIIKVSSDGASYHLLWGLENGGRPTSELASHLKCHIVRLSQDPDHRVILHTHATAVSAMTFVHDLDEAKFTRTLWQMITECLVVFPDGVAVVPWMVAGTNELGEASAAKMNDSRIVVWAHHGIMGAGTTMDDAFGLVETVEKAAKIYMQIAHFPTGIKQAITDEELVALAERFNVVPKAGILKEAGGVK.

Residue Glu-116 is part of the active site. Zn(2+) contacts are provided by His-139, His-141, and His-210.

Belongs to the aldolase class II family. RhaD subfamily. It depends on Zn(2+) as a cofactor.

The protein localises to the cytoplasm. It carries out the reaction L-rhamnulose 1-phosphate = (S)-lactaldehyde + dihydroxyacetone phosphate. The protein operates within carbohydrate degradation; L-rhamnose degradation; glycerone phosphate from L-rhamnose: step 3/3. Functionally, catalyzes the reversible cleavage of L-rhamnulose-1-phosphate to dihydroxyacetone phosphate (DHAP) and L-lactaldehyde. The polypeptide is Rhamnulose-1-phosphate aldolase (Listeria welshimeri serovar 6b (strain ATCC 35897 / DSM 20650 / CCUG 15529 / CIP 8149 / NCTC 11857 / SLCC 5334 / V8)).